A 561-amino-acid polypeptide reads, in one-letter code: Formate--tetrahydrofolate ligase (561 aa).

66–73 (TPAGEGKT) contacts ATP.

This sequence belongs to the formate--tetrahydrofolate ligase family.

It catalyses the reaction (6S)-5,6,7,8-tetrahydrofolate + formate + ATP = (6R)-10-formyltetrahydrofolate + ADP + phosphate. It functions in the pathway one-carbon metabolism; tetrahydrofolate interconversion. The polypeptide is Formate--tetrahydrofolate ligase (Methylibium petroleiphilum (strain ATCC BAA-1232 / LMG 22953 / PM1)).